Here is an 811-residue protein sequence, read N- to C-terminus: TLR4 interactor with leucine rich repeats (811 aa).

Positions 1 to 25 (MEAARALRLLLVVCGCLALPPLAEP) are cleaved as a signal peptide. Residues 26-57 (VCPERCDCQHPQHLLCTNRGLRVVPKTSSLPS) form the LRRNT domain. The Extracellular segment spans residues 26 to 696 (VCPERCDCQH…AGSRGGVDYQ (671 aa)). 12 LRR repeats span residues 61 to 81 (VLTY…DFHR), 84 to 105 (QLRR…TFEK), 108 to 129 (RLEE…TLAP), 132 to 153 (KLRI…SFEG), 156 to 177 (SLVK…VFAP), 180 to 201 (NLLY…AFAQ), 204 to 223 (KLRF…RHAA), 230 to 251 (SLSS…IFQH), 254 to 275 (RLGL…AFWG), 278 to 299 (ALRE…LLEP), 302 to 323 (SLEA…TFGH), and 326 to 347 (RLRE…IFAA). Asn73 is a glycosylation site (N-linked (GlcNAc...) asparagine). The N-linked (GlcNAc...) asparagine glycan is linked to Asn209. In terms of domain architecture, LRRCT spans 359–416 (NGWTCDCRLRGLKRWMGDWHSQGRLLTVFVQCRHPPALRGKYLDYLDDQQLQNGSCAD). The interval 484–549 (LSRRGPGLQQ…PSPAGDPWQR (66 aa)) is disordered. Composition is skewed to low complexity over residues 492 to 508 (QQPS…APQS) and 530 to 544 (PTPT…SPAG). N-linked (GlcNAc...) asparagine glycosylation occurs at Asn589. Residues 697–717 (LLTLALLTVNALLVLLALAAW) form a helical membrane-spanning segment. Over 718–811 (ASRWLRRKLR…EDRLLQRFAD (94 aa)) the chain is Cytoplasmic. Ser798 bears the Phosphoserine mark.

As to quaternary structure, belongs to the lipopolysaccharide (LPS) receptor, a multi-protein complex containing at least CD14, MD-2 and TLR4. Interacts with TLR4; this interaction is greatly enhanced by LPS stimulation. Interacts with LPS. In terms of processing, N-glycolysaled. As to expression, highly expressed in the brain, ovary, small intestine and spleen.

The protein resides in the membrane. Component of the TLR4 signaling complex. Mediates the innate immune response to bacterial lipopolysaccharide (LPS) leading to cytokine secretion. The polypeptide is TLR4 interactor with leucine rich repeats (TRIL) (Homo sapiens (Human)).